The chain runs to 188 residues: MYFRTGFCLFYFFQWRCSVISDKTRINEKIRGKEFRIISFDGEQLGIMTAEQALNLASSQGYDLVEIAPSATPPVCKIMDYSKYKYEQTRKLKEAKKNQKQVVIKEIKVTARIDSHDLETKLNQVTKFLEKENKVKVTLVLFGREKMHANLGVTTLDEIAEKFSETAEVEKKYADKQKHLILSPKKVK.

Belongs to the IF-3 family. As to quaternary structure, monomer.

Its subcellular location is the cytoplasm. Its function is as follows. IF-3 binds to the 30S ribosomal subunit and shifts the equilibrium between 70S ribosomes and their 50S and 30S subunits in favor of the free subunits, thus enhancing the availability of 30S subunits on which protein synthesis initiation begins. The protein is Translation initiation factor IF-3 of Fusobacterium nucleatum subsp. nucleatum (strain ATCC 25586 / DSM 15643 / BCRC 10681 / CIP 101130 / JCM 8532 / KCTC 2640 / LMG 13131 / VPI 4355).